Consider the following 752-residue polypeptide: Multifunctional tryptophan biosynthesis protein (752 aa).

The Glutamine amidotransferase type-1 domain occupies 3–202 (FTLLIDNYDS…IQMKGGKWGG (200 aa)). 58–60 (GPG) provides a ligand contact to L-glutamine. Cys86 (nucleophile; for GATase activity) is an active-site residue. Residue 136-137 (SL) participates in L-glutamine binding. Residues His176 and Glu178 each act as for GATase activity in the active site. The interval 231–495 (ILNKIHAQRL…DTKAFLRSLI (265 aa)) is indole-3-glycerol phosphate synthase. Residues 509–752 (LVKICGIRST…VEAFVKAVRG (244 aa)) form an N-(5'-phosphoribosyl)anthranilate isomerase region.

It carries out the reaction N-(5-phospho-beta-D-ribosyl)anthranilate = 1-(2-carboxyphenylamino)-1-deoxy-D-ribulose 5-phosphate. The catalysed reaction is 1-(2-carboxyphenylamino)-1-deoxy-D-ribulose 5-phosphate + H(+) = (1S,2R)-1-C-(indol-3-yl)glycerol 3-phosphate + CO2 + H2O. It catalyses the reaction chorismate + L-glutamine = anthranilate + pyruvate + L-glutamate + H(+). The protein operates within amino-acid biosynthesis; L-tryptophan biosynthesis; L-tryptophan from chorismate: step 1/5. Its pathway is amino-acid biosynthesis; L-tryptophan biosynthesis; L-tryptophan from chorismate: step 3/5. It participates in amino-acid biosynthesis; L-tryptophan biosynthesis; L-tryptophan from chorismate: step 4/5. Functionally, trifunctional enzyme bearing the Gln amidotransferase (GATase) domain of anthranilate synthase, indole-glycerolphosphate synthase, and phosphoribosylanthranilate isomerase activities. The chain is Multifunctional tryptophan biosynthesis protein (TRP1) from Cryptococcus neoformans var. grubii serotype A (strain H99 / ATCC 208821 / CBS 10515 / FGSC 9487) (Filobasidiella neoformans var. grubii).